The primary structure comprises 280 residues: Dihydropteroate synthase (280 aa).

In terms of domain architecture, Pterin-binding spans 1-265; that stretch reads MSPAPVQVMG…DVRASVDAIK (265 aa). Asn-13 contributes to the Mg(2+) binding site. (7,8-dihydropterin-6-yl)methyl diphosphate-binding positions include Asp-86, Asn-105, Asp-177, Lys-213, and 253 to 255; that span reads RVH.

It belongs to the DHPS family. Homodimer. It depends on Mg(2+) as a cofactor.

It carries out the reaction (7,8-dihydropterin-6-yl)methyl diphosphate + 4-aminobenzoate = 7,8-dihydropteroate + diphosphate. It participates in cofactor biosynthesis; tetrahydrofolate biosynthesis; 7,8-dihydrofolate from 2-amino-4-hydroxy-6-hydroxymethyl-7,8-dihydropteridine diphosphate and 4-aminobenzoate: step 1/2. Functionally, catalyzes the condensation of para-aminobenzoate (pABA) with 6-hydroxymethyl-7,8-dihydropterin diphosphate (DHPt-PP) to form 7,8-dihydropteroate (H2Pte), the immediate precursor of folate derivatives. The chain is Dihydropteroate synthase (folP1) from Mycobacterium bovis (strain ATCC BAA-935 / AF2122/97).